The sequence spans 299 residues: Cytidine deaminase (299 aa).

2 consecutive CMP/dCMP-type deaminase domains span residues 56–176 (SKIE…FGPK) and 194–299 (LQGD…YIAV). 97–99 (NQE) provides a ligand contact to substrate. Residue histidine 110 participates in Zn(2+) binding. Catalysis depends on glutamate 112, which acts as the Proton donor. Zn(2+) contacts are provided by cysteine 137 and cysteine 140.

It belongs to the cytidine and deoxycytidylate deaminase family. Homodimer. Zn(2+) serves as cofactor.

It catalyses the reaction cytidine + H2O + H(+) = uridine + NH4(+). The enzyme catalyses 2'-deoxycytidine + H2O + H(+) = 2'-deoxyuridine + NH4(+). This enzyme scavenges exogenous and endogenous cytidine and 2'-deoxycytidine for UMP synthesis. The polypeptide is Cytidine deaminase (Haemophilus ducreyi (strain 35000HP / ATCC 700724)).